The sequence spans 200 residues: General odorant-binding protein 70 (200 aa).

A signal peptide spans 1 to 29 (MRRQYSMWASTVAVIACGSALMLLHPVGA). 2 disulfides stabilise this stretch: cysteine 105–cysteine 174 and cysteine 152–cysteine 183.

Belongs to the PBP/GOBP family.

The protein resides in the secreted. In terms of biological role, present in the aqueous fluid surrounding olfactory sensory dendrites and are thought to aid in the capture and transport of hydrophobic odorants into and through this fluid. This chain is General odorant-binding protein 70 (Obp70), found in Anopheles gambiae (African malaria mosquito).